Here is a 371-residue protein sequence, read N- to C-terminus: Signal peptide peptidase-like 1 (371 aa).

The Lumenal portion of the chain corresponds to Met-1–Lys-6. The helical transmembrane segment at Leu-7–Tyr-27 threads the bilayer. Residues Ala-28–Gln-57 lie on the Cytoplasmic side of the membrane. A helical membrane pass occupies residues Ala-58 to Leu-75. The Lumenal segment spans residues Phe-76 to Ser-80. A helical transmembrane segment spans residues His-81–Val-103. Over Asn-104–Lys-123 the chain is Cytoplasmic. A helical membrane pass occupies residues Pro-124 to Ser-146. Residues Gly-147–Trp-149 are Lumenal-facing. Residues Leu-150–Val-167 form a helical membrane-spanning segment. The Cytoplasmic portion of the chain corresponds to Arg-168–Asn-171. The chain crosses the membrane as a helical span at residues Ile-172 to Phe-192. The active site involves Asp-186. The Lumenal portion of the chain corresponds to Ser-193–Tyr-258. A helical membrane pass occupies residues Met-259 to Phe-279. Asp-265 is a catalytic residue. Over Asp-280–Tyr-301 the chain is Cytoplasmic. A helical transmembrane segment spans residues Val-302–Leu-322. The Lumenal segment spans residues Ser-323–Pro-326. Residues Gln-327 to Leu-347 traverse the membrane as a helical segment. Positions Pro-328–Leu-330 match the PAL motif. At Arg-348 to Val-371 the chain is on the cytoplasmic side.

The protein belongs to the peptidase A22B family.

The protein localises to the endosome membrane. Its function is as follows. Intramembrane-cleaving aspartic protease (I-CLiP) that cleaves type II membrane signal peptides in the hydrophobic plane of the membrane. The protein is Signal peptide peptidase-like 1 (SPPL1) of Oryza sativa subsp. japonica (Rice).